Consider the following 322-residue polypeptide: Uracil-DNA glycosylase (322 aa).

D142 serves as the catalytic Proton acceptor.

Belongs to the uracil-DNA glycosylase (UDG) superfamily. UNG family.

The protein resides in the mitochondrion. It localises to the nucleus. The enzyme catalyses Hydrolyzes single-stranded DNA or mismatched double-stranded DNA and polynucleotides, releasing free uracil.. Functionally, excises uracil residues from the DNA which can arise as a result of misincorporation of dUMP residues by DNA polymerase or due to deamination of cytosine. In Schizosaccharomyces pombe (strain 972 / ATCC 24843) (Fission yeast), this protein is Uracil-DNA glycosylase (ung1).